The chain runs to 1052 residues: MQVMPPTPGGGPSRLFILRPVATTLFMIAILLAGIIGYRALPVSALPEVDYPTIQVVTLYPGASPDVVTSSITAPLERQFGQMSGLKQMASQSSGGASVITLQFQLTLPLDVAEQEVQAAINAATNLLPSDLPYPPIYNKVNPADPPILTLAVTATAIPMTQVEDMVETRIAQKISQVTGVGLVTLSGGQRPAVRVKLNAPAVAALGLDSETIRTAISNANVNSAKGSLDGPTRSVTLSANDQMKSAEEYRDLIIAYQNGAPIRLQDVATIEQGAENNKLAAWANTQSAIVLNIQRQPGVNVIATADSIREMLPELIKSLPKSVDVKVLTDRTSTIRASVNDVQFELLLAIALVVMVIYLFLRNAAATIIPSIAVPLSLVGTFAAMYFLGFSINNLTLMALTIATGFVVDDAIVVIENISRYIEKGEKPLDAALKGAGEIGFTIISLTFSLIAVLIPLLFMEDIVGRLFREFAVTLAVAILISAVVSLTLTPMMCARMLSYESLRKQNRLSRASEKFFDWVIAHYAVALKKVLNHPWLTLSVAFSTLVLTVILYLLIPKGFFPLQDNGLIQGTLEAPQSVSFSNMAERQQQVAAIILKDPAVESLTSFVGVDGTNATLNNGRLQINLKPLSERDDRIPQIITRLQESVSGVPGIKLYLQPVQDLTIDTQLSRTQYQFTLQATSLEELSTWVPKLVNELQQKAPFQDVTSDWQDQGLVAFVNVDRDSASRLGITMAAIDNALYNAFGQRLISTIYTQSNQYRVVLEHDVQATPGLAAFNDIRLTGIDGKGVPLSSIATIEERFGPLSINHLNQFPSATVSFNLAQGYSLGEAVAAVTLAEKEIQLPADITTRFQGSTLAFQAALGSTLWLIIAAIVAMYIVLGVLYESFIHPITILSTLPTAGVGALLALMLTGNELDVIAIIGIILLIGIVKKNAIMMIDFALAAERDQGMTPYDAIYQACLLRFRPILMTTLAALFGALPLMLSTGVGAELRQPLGVCMVGGLIVSQVLTLFTTPVIYLLFDKLARNTRGKNRHRDEDIDSSELLNGQEPQ.

Transmembrane regions (helical) follow at residues 15 to 37 (LFILRPVATTLFMIAILLAGIIG), 345 to 362 (FELLLAIALVVMVIYLFL), 367 to 389 (ATIIPSIAVPLSLVGTFAAMYFL), 396 to 418 (LTLMALTIATGFVVDDAIVVIEN), 438 to 460 (GEIGFTIISLTFSLIAVLIPLLF), 472 to 494 (FAVTLAVAILISAVVSLTLTPMM), 535 to 557 (HPWLTLSVAFSTLVLTVILYLLI), 867 to 889 (LWLIIAAIVAMYIVLGVLYESFI), 909 to 931 (LMLTGNELDVIAIIGIILLIGIV), 968 to 990 (ILMTTLAALFGALPLMLSTGVGA), and 1000 to 1022 (MVGGLIVSQVLTLFTTPVIYLLF). A disordered region spans residues 1032–1052 (KNRHRDEDIDSSELLNGQEPQ).

Belongs to the resistance-nodulation-cell division (RND) (TC 2.A.6) family. MdtB subfamily. As to quaternary structure, part of a tripartite efflux system composed of MdtA, MdtB and MdtC. MdtB forms a heteromultimer with MdtC.

The protein resides in the cell inner membrane. The chain is Multidrug resistance protein MdtB from Yersinia pestis.